The following is a 330-amino-acid chain: Uroporphyrinogen decarboxylase (330 aa).

Substrate contacts are provided by residues 10 to 14 (RQAGR), Phe29, Ser59, Asp60, Tyr137, Ser192, and His307.

This sequence belongs to the uroporphyrinogen decarboxylase family. As to quaternary structure, homodimer.

The protein localises to the plastid. It localises to the chloroplast. It catalyses the reaction uroporphyrinogen III + 4 H(+) = coproporphyrinogen III + 4 CO2. It participates in porphyrin-containing compound metabolism; protoporphyrin-IX biosynthesis; coproporphyrinogen-III from 5-aminolevulinate: step 4/4. Its function is as follows. Catalyzes the decarboxylation of four acetate groups of uroporphyrinogen-III to yield coproporphyrinogen-III. This chain is Uroporphyrinogen decarboxylase (DCUP), found in Hordeum vulgare (Barley).